The sequence spans 143 residues: Holo-[acyl-carrier-protein] synthase (143 aa).

D9 and E63 together coordinate Mg(2+).

The protein belongs to the P-Pant transferase superfamily. AcpS family. It depends on Mg(2+) as a cofactor.

Its subcellular location is the cytoplasm. The catalysed reaction is apo-[ACP] + CoA = holo-[ACP] + adenosine 3',5'-bisphosphate + H(+). In terms of biological role, transfers the 4'-phosphopantetheine moiety from coenzyme A to a Ser of acyl-carrier-protein. In Burkholderia mallei (strain NCTC 10247), this protein is Holo-[acyl-carrier-protein] synthase.